Consider the following 96-residue polypeptide: YcgL domain-containing protein Csal_1462 (96 aa).

In terms of domain architecture, YcgL spans 4 to 88; the sequence is RLCEIFKSPR…ARESYLLDLY (85 aa).

The polypeptide is YcgL domain-containing protein Csal_1462 (Chromohalobacter salexigens (strain ATCC BAA-138 / DSM 3043 / CIP 106854 / NCIMB 13768 / 1H11)).